A 92-amino-acid polypeptide reads, in one-letter code: MARSIWKGPFVDGYLIKKVQKLMESGKSEMIKTWSRRSTILPIFVGFTFSVHNGNKFVPVSVNEEMVGKKLGDFAPTRTFYGHGADKKVKRK.

Belongs to the universal ribosomal protein uS19 family.

Protein S19 forms a complex with S13 that binds strongly to the 16S ribosomal RNA. This Rickettsia akari (strain Hartford) protein is Small ribosomal subunit protein uS19.